The primary structure comprises 138 residues: Transcription antitermination protein NusB (138 aa).

It belongs to the NusB family.

Its function is as follows. Involved in transcription antitermination. Required for transcription of ribosomal RNA (rRNA) genes. Binds specifically to the boxA antiterminator sequence of the ribosomal RNA (rrn) operons. The polypeptide is Transcription antitermination protein NusB (Helicobacter pylori (strain J99 / ATCC 700824) (Campylobacter pylori J99)).